A 1045-amino-acid chain; its full sequence is DNA polymerase (1045 aa).

The disordered stretch occupies residues 331–355; the sequence is IKENEESDSESDNDDEEDKKENDGA. Residues 335–348 show a composition bias toward acidic residues; that stretch reads EESDSESDNDDEED.

It belongs to the DNA polymerase type-B family.

It carries out the reaction DNA(n) + a 2'-deoxyribonucleoside 5'-triphosphate = DNA(n+1) + diphosphate. The chain is DNA polymerase (dpo) from Phaeocystis pouchetii (PpV01).